Consider the following 871-residue polypeptide: MAMLVTNLSSSSFCFFSSPHLQNQKEIRSGVRVRKYVIFNRASLRTVSDCVDSITTFDRSVTDANTQLRRFCESGNLENAVKLLCVSGKWDIDPRTLCSVLQLCADSKSLKDGKEVDNFIRGNGFVIDSNLGSKLSLMYTNCGDLKEASRVFDEVKIEKALFWNILMNELAKSGDFSGSIGLFKKMMSSGVEMDSYTFSCVSKSFSSLRSVHGGEQLHGFILKSGFGERNSVGNSLVAFYLKNQRVDSARKVFDEMTERDVISWNSIINGYVSNGLAEKGLSVFVQMLVSGIEIDLATIVSVFAGCADSRLISLGRAVHSIGVKACFSREDRFCNTLLDMYSKCGDLDSAKAVFREMSDRSVVSYTSMIAGYAREGLAGEAVKLFEEMEEEGISPDVYTVTAVLNCCARYRLLDEGKRVHEWIKENDLGFDIFVSNALMDMYAKCGSMQEAELVFSEMRVKDIISWNTIIGGYSKNCYANEALSLFNLLLEEKRFSPDERTVACVLPACASLSAFDKGREIHGYIMRNGYFSDRHVANSLVDMYAKCGALLLAHMLFDDIASKDLVSWTVMIAGYGMHGFGKEAIALFNQMRQAGIEADEISFVSLLYACSHSGLVDEGWRFFNIMRHECKIEPTVEHYACIVDMLARTGDLIKAYRFIENMPIPPDATIWGALLCGCRIHHDVKLAEKVAEKVFELEPENTGYYVLMANIYAEAEKWEQVKRLRKRIGQRGLRKNPGCSWIEIKGRVNIFVAGDSSNPETENIEAFLRKVRARMIEEGYSPLTKYALIDAEEMEKEEALCGHSEKLAMALGIISSGHGKIIRVTKNLRVCGDCHEMAKFMSKLTRREIVLRDSNRFHQFKDGHCSCRGFW.

A chloroplast-targeting transit peptide spans 1–28 (MAMLVTNLSSSSFCFFSSPHLQNQKEIR). PPR repeat units follow at residues 60–94 (SVTDANTQLRRFCESGNLENAVKLLCVSGKWDIDP), 96–127 (TLCSVLQLCADSKSLKDGKEVDNFIRGNGFVI), 128–158 (DSNLGSKLSLMYTNCGDLKEASRVFDEVKIE), 159–193 (KALFWNILMNELAKSGDFSGSIGLFKKMMSSGVEM), 194–228 (DSYTFSCVSKSFSSLRSVHGGEQLHGFILKSGFGE), 229–259 (RNSVGNSLVAFYLKNQRVDSARKVFDEMTER), 260–294 (DVISWNSIINGYVSNGLAEKGLSVFVQMLVSGIEI), 295–329 (DLATIVSVFAGCADSRLISLGRAVHSIGVKACFSR), 330–360 (EDRFCNTLLDMYSKCGDLDSAKAVFREMSDR), 361–395 (SVVSYTSMIAGYAREGLAGEAVKLFEEMEEEGISP), 396–430 (DVYTVTAVLNCCARYRLLDEGKRVHEWIKENDLGF), 431–465 (DIFVSNALMDMYAKCGSMQEAELVFSEMRVKDIIS), 466–497 (WNTIIGGYSKNCYANEALSLFNLLLEEKRFSP), 498–532 (DERTVACVLPACASLSAFDKGREIHGYIMRNGYFS), 533–563 (DRHVANSLVDMYAKCGALLLAHMLFDDIASK), 564–598 (DLVSWTVMIAGYGMHGFGKEAIALFNQMRQAGIEA), 599–629 (DEISFVSLLYACSHSGLVDEGWRFFNIMRHE), and 635–665 (TVEHYACIVDMLARTGDLIKAYRFIENMPIP). The interval 670–745 (IWGALLCGCR…NPGCSWIEIK (76 aa)) is type E motif. Residues 746–776 (GRVNIFVAGDSSNPETENIEAFLRKVRARMI) form a type E(+) motif region. The type DYW motif stretch occupies residues 777 to 871 (EEGYSPLTKY…DGHCSCRGFW (95 aa)).

This sequence belongs to the PPR family. PCMP-H subfamily. Zn(2+) is required as a cofactor. As to expression, weakly expressed in leaves.

The protein resides in the plastid. The protein localises to the chloroplast. Functionally, plays a major role in single RNA editing events in chloroplasts. Acts as a site-recognition transacting factor involved in the edition of the unique site (corresponding to cytidine-488) of rpoC1, which is a plastid-encoded subunit of the chloroplast DNA-directed RNA polymerase. May provide the catalytic activity for editing site conversion. Involved in leaf vasculature patterning. The sequence is that of Pentatricopeptide repeat-containing protein DOT4, chloroplastic from Arabidopsis thaliana (Mouse-ear cress).